The sequence spans 139 residues: Probable trafficking protein particle complex subunit 2 (139 aa).

It belongs to the TRAPP small subunits family. Sedlin subfamily. As to quaternary structure, part of the multisubunit TRAPP (transport protein particle) complex.

It localises to the cytoplasm. Its subcellular location is the perinuclear region. It is found in the endoplasmic reticulum. The protein resides in the golgi apparatus. Functionally, may play a role in vesicular transport from endoplasmic reticulum to Golgi. Involved in dsRNA uptake. The protein is Probable trafficking protein particle complex subunit 2 of Drosophila melanogaster (Fruit fly).